We begin with the raw amino-acid sequence, 274 residues long: Ommochrome-binding protein (274 aa).

The signal sequence occupies residues Met1–Ala18. The N-linked (GlcNAc...) asparagine glycan is linked to Asn183.

In terms of assembly, monomer. Present in larval hemolymph and synthesized by the fat body.

Binds to an ommochrome, ommatin D which is a yellow chromophore. May be involved in guiding the chromophore through the hemolymph from the epidermis to the gut. This Manduca sexta (Tobacco hawkmoth) protein is Ommochrome-binding protein.